The chain runs to 97 residues: Large ribosomal subunit protein bL27 (97 aa).

The propeptide occupies 1 to 9; the sequence is MFTFDLQLF.

This sequence belongs to the bacterial ribosomal protein bL27 family. Post-translationally, the N-terminus is cleaved by ribosomal processing cysteine protease Prp.

In Syntrophomonas wolfei subsp. wolfei (strain DSM 2245B / Goettingen), this protein is Large ribosomal subunit protein bL27.